Reading from the N-terminus, the 702-residue chain is MADS-box MEF2 type transcription factor MIG1 (702 aa).

Residues 1 to 61 enclose the MADS-box domain; the sequence is MGRRKIEIKA…KKLYEYSSGD (61 aa). 2 disordered regions span residues 73-608 and 658-702; these read GGAT…NIDT and PSFL…KVDS. Residues 86-96 are compositionally biased toward acidic residues; it reads GGDDDDEEEGD. Pro residues predominate over residues 132–144; that stretch reads ASPPIPNGVPFPP. Positions 145–155 are enriched in low complexity; the sequence is HGHGVPRGHTP. The span at 180–195 shows a compositional bias: polar residues; the sequence is GSPQVNGFGFGQQQSM. The segment covering 201–241 has biased composition (pro residues); it reads TTMPPHMPPQMAPGPPFPYPQHPQHPPHPPHPPHPPHPQQP. Composition is skewed to low complexity over residues 273-284, 326-343, and 350-371; these read PMGMQRHSVSPP, ESPQ…QQPE, and EQQQ…QSEP. Residues 456-465 are compositionally biased toward polar residues; sequence VDESTSNASE. Composition is skewed to low complexity over residues 487-512 and 530-553; these read RASI…SLRA and DGSG…DATS. The segment covering 554-567 has biased composition (polar residues); the sequence is QSTRQNDSHSSTNM. Residues 587 to 600 are compositionally biased toward pro residues; that stretch reads PPNPFAPKRPPQHP. Residues 693 to 702 show a composition bias toward basic and acidic residues; sequence NEPKRVKVDS.

This sequence belongs to the MEF2 family. Interacts with MAPK MPS1.

It localises to the nucleus. Its function is as follows. Transcription factor acting downstream of the MPS1 MAP kinase (MAPK) cascade during conidiation and plant infection. Required for overcoming plant defense responses and the differentiation of secondary infectious hyphae in live plant cells. The sequence is that of MADS-box MEF2 type transcription factor MIG1 from Pyricularia oryzae (Rice blast fungus).